The following is a 206-amino-acid chain: Small ribosomal subunit protein uS4 (206 aa).

The region spanning 96 to 156 is the S4 RNA-binding domain; it reads TRLDNVVYRM…EKSRTQARIK (61 aa).

It belongs to the universal ribosomal protein uS4 family. In terms of assembly, part of the 30S ribosomal subunit. Contacts protein S5. The interaction surface between S4 and S5 is involved in control of translational fidelity.

Its function is as follows. One of the primary rRNA binding proteins, it binds directly to 16S rRNA where it nucleates assembly of the body of the 30S subunit. With S5 and S12 plays an important role in translational accuracy. In Shewanella sp. (strain ANA-3), this protein is Small ribosomal subunit protein uS4.